The sequence spans 484 residues: Glutamyl-tRNA(Gln) amidotransferase subunit A (484 aa).

Active-site charge relay system residues include K77 and S152. The active-site Acyl-ester intermediate is the S176.

Belongs to the amidase family. GatA subfamily. As to quaternary structure, heterotrimer of A, B and C subunits.

It catalyses the reaction L-glutamyl-tRNA(Gln) + L-glutamine + ATP + H2O = L-glutaminyl-tRNA(Gln) + L-glutamate + ADP + phosphate + H(+). In terms of biological role, allows the formation of correctly charged Gln-tRNA(Gln) through the transamidation of misacylated Glu-tRNA(Gln) in organisms which lack glutaminyl-tRNA synthetase. The reaction takes place in the presence of glutamine and ATP through an activated gamma-phospho-Glu-tRNA(Gln). This is Glutamyl-tRNA(Gln) amidotransferase subunit A from Lacticaseibacillus casei (strain BL23) (Lactobacillus casei).